The chain runs to 342 residues: Outer spore wall protein RRT8 (342 aa).

Topologically, residues 1 to 109 (MKAGIELISH…VLTNPVYWKH (109 aa)) are cytoplasmic. The chain crosses the membrane as a helical span at residues 110–130 (ILLFAVCYALIFVTIAGLFYV). A topological domain (extracellular) is located at residue Thr-131. The chain crosses the membrane as a helical span at residues 132–152 (LVPLLVTWAILLLGPLGVILV). Residues 153–240 (HIQWILQTNV…PRLLFRMFFK (88 aa)) are Cytoplasmic-facing. A helical transmembrane segment spans residues 241-261 (VSNFTSLTLLSLIPIVGPILA). At 262-299 (NQLMAPKRTFTYLQRYFLLKGFSKKQAKDFQYEHYASF) the chain is on the extracellular side. The chain crosses the membrane as a helical span at residues 300–320 (ICFGMSAGLLELIPFFTIVTI). At 321–342 (SSNTVGAAKWCTSLLKGERKKE) the chain is on the cytoplasmic side.

Belongs to the LDS family.

It localises to the prospore membrane. It is found in the lipid droplet. The protein resides in the spore wall. In terms of biological role, involved in spore wall assembly. May be involved in the modulation of rDNA transcription. The polypeptide is Outer spore wall protein RRT8 (Saccharomyces cerevisiae (strain ATCC 204508 / S288c) (Baker's yeast)).